The following is a 314-amino-acid chain: tRNA-cytidine(32) 2-sulfurtransferase (314 aa).

The PP-loop motif signature appears at 39 to 44 (SGGKDS). [4Fe-4S] cluster contacts are provided by Cys114, Cys117, and Cys205.

This sequence belongs to the TtcA family. As to quaternary structure, homodimer. Mg(2+) serves as cofactor. It depends on [4Fe-4S] cluster as a cofactor.

Its subcellular location is the cytoplasm. It carries out the reaction cytidine(32) in tRNA + S-sulfanyl-L-cysteinyl-[cysteine desulfurase] + AH2 + ATP = 2-thiocytidine(32) in tRNA + L-cysteinyl-[cysteine desulfurase] + A + AMP + diphosphate + H(+). The protein operates within tRNA modification. Its function is as follows. Catalyzes the ATP-dependent 2-thiolation of cytidine in position 32 of tRNA, to form 2-thiocytidine (s(2)C32). The sulfur atoms are provided by the cysteine/cysteine desulfurase (IscS) system. The protein is tRNA-cytidine(32) 2-sulfurtransferase of Cupriavidus metallidurans (strain ATCC 43123 / DSM 2839 / NBRC 102507 / CH34) (Ralstonia metallidurans).